The sequence spans 2785 residues: Testis-expressed protein 15 (2785 aa).

The segment covering 262-274 (SSSFPSSLSNAFS) has biased composition (low complexity). 8 disordered regions span residues 262–331 (SSSF…PSSD), 596–620 (EQRDDKNPNEAKEHNTDNINGSEKQ), 661–683 (NGKPAETASSESEAVEQRHAPND), 904–924 (TESTEPETNKEGNASGFGMCS), 943–1064 (VQES…QGRI), 2276–2458 (NRQE…TNDK), 2470–2511 (DIDA…LVPD), and 2571–2601 (TQPIKSESPKKSMTDAPNPNTAPFGSYGNSA). Basic and acidic residues predominate over residues 275 to 286 (DVRKQKHSEEQV). Polar residues predominate over residues 314 to 331 (TCSNDSQGHFSQESPSSD). Residues 596–611 (EQRDDKNPNEAKEHNT) are compositionally biased toward basic and acidic residues. Polar residues-rich tracts occupy residues 962 to 989 (HNTHVDQGSGKPNNDSLSTEPSNVTVMN) and 1021 to 1031 (HASSSRGQNIA). The span at 1033 to 1042 (KDLREHETHE) shows a compositional bias: basic and acidic residues. Polar residues-rich tracts occupy residues 1049–1064 (SHGSSDRFSSLSQGRI), 2291–2314 (DSSQPGVSEQTPPGTECTVKNISD), 2327–2338 (EVSQGKGNTDTV), 2353–2387 (NIQTVSKHPSTTGSPPNDENKIGSNSSDSLKSISA), 2394–2415 (RQSSVLGSVSPAESVQDTCTPK), 2431–2454 (ASLTEQQENSNVIEKRNGNSSVAE), 2491–2502 (DHTQISPSNLTA), and 2585–2601 (DAPNPNTAPFGSYGNSA).

It belongs to the TEX15 family. In terms of assembly, interacts with PIWIL4. Interacts with PIWIL2. In terms of tissue distribution, detected in testis and ovary, and at lower levels in lung and brain.

Its subcellular location is the cytoplasm. The protein localises to the nucleus. Its function is as follows. Required during spermatogenesis for normal chromosome synapsis and meiotic recombination in germ cells. Necessary for formation of DMC1 and RAD51 foci on meiotic chromosomes, suggesting a specific role in DNA double-stranded break repair. Essential executor of PIWIL4-piRNA pathway directed transposon DNA methylation and silencing in the male embryonic germ cells. PIWIL4-piRNA binds to nascent transposon transcripts and interacts with TEX15, which may in turn recruit the epigenetic silencing machinery to the transposon loci. Not required for piRNA biosynthesis. This is Testis-expressed protein 15 from Mus musculus (Mouse).